A 131-amino-acid chain; its full sequence is Aspartate 1-decarboxylase (131 aa).

Ser-25 functions as the Schiff-base intermediate with substrate; via pyruvic acid in the catalytic mechanism. Position 25 is a pyruvic acid (Ser) (Ser-25). Residue Thr-57 coordinates substrate. Residue Tyr-58 is the Proton donor of the active site. Position 73-75 (73-75 (GAA)) interacts with substrate.

It belongs to the PanD family. Heterooctamer of four alpha and four beta subunits. Pyruvate serves as cofactor. In terms of processing, is synthesized initially as an inactive proenzyme, which is activated by self-cleavage at a specific serine bond to produce a beta-subunit with a hydroxyl group at its C-terminus and an alpha-subunit with a pyruvoyl group at its N-terminus.

It localises to the cytoplasm. It carries out the reaction L-aspartate + H(+) = beta-alanine + CO2. Its pathway is cofactor biosynthesis; (R)-pantothenate biosynthesis; beta-alanine from L-aspartate: step 1/1. Catalyzes the pyruvoyl-dependent decarboxylation of aspartate to produce beta-alanine. The polypeptide is Aspartate 1-decarboxylase (Anaeromyxobacter dehalogenans (strain 2CP-C)).